The sequence spans 186 residues: Ribosome-recycling factor (186 aa).

The segment at 144–163 is disordered; the sequence is EKDGVIGQDESRAQSERVQK.

It belongs to the RRF family.

It localises to the cytoplasm. In terms of biological role, responsible for the release of ribosomes from messenger RNA at the termination of protein biosynthesis. May increase the efficiency of translation by recycling ribosomes from one round of translation to another. The protein is Ribosome-recycling factor of Rhizobium johnstonii (strain DSM 114642 / LMG 32736 / 3841) (Rhizobium leguminosarum bv. viciae).